A 124-amino-acid polypeptide reads, in one-letter code: MATINQLVRKPRKDKMKKSNVPALEACPQRRGVCTRVYTTTPKKPNSALRKVARVRLTNGYEVSSYIGGEGHNLQEHSVILIRGGRVKDLPGVRYHTVRGSLDCAGVDGRKQGRSKYGAKRPKG.

D89 is subject to 3-methylthioaspartic acid.

This sequence belongs to the universal ribosomal protein uS12 family. As to quaternary structure, part of the 30S ribosomal subunit. Contacts proteins S8 and S17. May interact with IF1 in the 30S initiation complex.

Functionally, with S4 and S5 plays an important role in translational accuracy. In terms of biological role, interacts with and stabilizes bases of the 16S rRNA that are involved in tRNA selection in the A site and with the mRNA backbone. Located at the interface of the 30S and 50S subunits, it traverses the body of the 30S subunit contacting proteins on the other side and probably holding the rRNA structure together. The combined cluster of proteins S8, S12 and S17 appears to hold together the shoulder and platform of the 30S subunit. The chain is Small ribosomal subunit protein uS12 from Hydrogenovibrio crunogenus (strain DSM 25203 / XCL-2) (Thiomicrospira crunogena).